Consider the following 187-residue polypeptide: Elongation factor P (187 aa).

Belongs to the elongation factor P family.

The protein resides in the cytoplasm. Its pathway is protein biosynthesis; polypeptide chain elongation. Functionally, involved in peptide bond synthesis. Stimulates efficient translation and peptide-bond synthesis on native or reconstituted 70S ribosomes in vitro. Probably functions indirectly by altering the affinity of the ribosome for aminoacyl-tRNA, thus increasing their reactivity as acceptors for peptidyl transferase. The sequence is that of Elongation factor P from Prochlorococcus marinus (strain NATL1A).